A 101-amino-acid polypeptide reads, in one-letter code: Replication restart protein PriB (101 aa).

The SSB domain occupies 1-101 (MTTNNLVLAG…LHAENVELKT (101 aa)).

Belongs to the PriB family. As to quaternary structure, homodimer. Interacts with PriA and DnaT. Component of the replication restart primosome. Primosome assembly occurs via a 'hand-off' mechanism. PriA binds to replication forks, subsequently PriB then DnaT bind; DnaT then displaces ssDNA to generate the helicase loading substrate.

Its function is as follows. Involved in the restart of stalled replication forks, which reloads the replicative helicase on sites other than the origin of replication; the PriA-PriB pathway is the major replication restart pathway. During primosome assembly it facilitates complex formation between PriA and DnaT on DNA; stabilizes PriA on DNA. Stimulates the DNA unwinding activity of PriA helicase. In Shewanella halifaxensis (strain HAW-EB4), this protein is Replication restart protein PriB.